The sequence spans 447 residues: MTPKPAGPPDGGWGWVVAAAAFAVNGLSYGLLRSLGLALPDLAEHFERSAQDTAWVSALALAVQQAASPVGSALSTRWGARPVVMVGGVLTSLGLVFSAFARSLLHLYLGLGLLAGSGWALVFAPALGTLSRYFSRRRVLAVGLALTGNGASSLLLAPALQFLLDTFGWRGALLLLGAVTLHLTPCGALLRPLALSGDPLAPPRTPLAALGLGLFKRRAFSVFALGTALIGGGYFVPYVHLGPHALDQGMGGYGAALVVAVAAVGDACARLASGWLADQGWVPLPRLLVVFGSLTGLGVLAMGLVPTVGTEEGWGAPLLAAAGAYGLSAGSYAPLVFGVLPGLVGIGGVVQATGLVMMLMSLGGLLGPPLSGFLRDKTGDFSASFLVCSSFILSGSFIYMGLPRALPSCRPASPPATPPPERGELLPVPQVSLLSAGGTGSIRDTTC.

Over M1–G11 the chain is Cytoplasmic. A run of 12 helical transmembrane segments spans residues G12–L32, A54–L74, A80–F100, L107–L127, V139–A159, F162–H182, A219–V239, G249–A269, L288–V308, G330–V350, G354–L374, and A383–P403. At R404–C447 the chain is on the cytoplasmic side.

This sequence belongs to the major facilitator superfamily. Monocarboxylate porter (TC 2.A.1.13) family. In terms of assembly, interacts with isoform 2 of BSG.

It is found in the endoplasmic reticulum membrane. It localises to the cell membrane. It carries out the reaction pyruvate(out) + H(+)(out) = pyruvate(in) + H(+)(in). In terms of biological role, proton-linked monocarboxylate transporter. It catalyzes the transport of pyruvate across the plasma membrane. Probably involved in hepatic lipid metabolism: overexpression results in an increase of triacylglycerol(TAG) levels, small increases in intracellular diacylglycerols and decreases in lysophosphatidylcholine, cholesterol ester and sphingomyelin lipids. In Mus musculus (Mouse), this protein is Monocarboxylate transporter 11 (Slc16a11).